The following is a 59-amino-acid chain: Sec-independent protein translocase protein TatA (59 aa).

Residues Met-1–Gly-21 form a helical membrane-spanning segment.

Belongs to the TatA/E family. As to quaternary structure, forms a complex with TatC.

It is found in the cell inner membrane. Functionally, part of the twin-arginine translocation (Tat) system that transports large folded proteins containing a characteristic twin-arginine motif in their signal peptide across membranes. TatA could form the protein-conducting channel of the Tat system. In Flavobacterium johnsoniae (strain ATCC 17061 / DSM 2064 / JCM 8514 / BCRC 14874 / CCUG 350202 / NBRC 14942 / NCIMB 11054 / UW101) (Cytophaga johnsonae), this protein is Sec-independent protein translocase protein TatA.